The primary structure comprises 185 residues: MKTAQELRVGNVVQIGSDAWVISKTEYNKSGRNAAVVKLKMKNLLTNAGQESVYKADDKFDVVMLDRKEVTYSYFADPMYVFMDADYNQYEVEAEMMGDALNYLEDGMACEVVFYNEKAISVELPTILVREITYTEPAVKGDTSSGKVLKNAKLATGFELQVPLFCNTGDKIEIDTRTHEYRSRA.

It belongs to the elongation factor P family.

The protein resides in the cytoplasm. The protein operates within protein biosynthesis; polypeptide chain elongation. Functionally, involved in peptide bond synthesis. Stimulates efficient translation and peptide-bond synthesis on native or reconstituted 70S ribosomes in vitro. Probably functions indirectly by altering the affinity of the ribosome for aminoacyl-tRNA, thus increasing their reactivity as acceptors for peptidyl transferase. The protein is Elongation factor P of Burkholderia multivorans (strain ATCC 17616 / 249).